We begin with the raw amino-acid sequence, 177 residues long: MSSNKIVLTSSDGESFQVEEVVARKLQIVKHLLEDDCVINEIPLQNVTGNILSIVLEYCKKHVDDVVDDDASEEPKKKKPDDEAKQNLDAWDAEFMKNIDMETIFKLILAANYLNVEGLLGLTCQTVADYIKDKTPEEVRELFNIENDFTHEEEEEAIRKENAWAFEADTKHEDPKP.

Residues Ile-108–Glu-167 form an interaction with the F-box domain of F-box proteins region.

Belongs to the SKP1 family. As to quaternary structure, part of a SCF (SKP1-cullin-F-box) protein ligase complex. In terms of tissue distribution, expressed at low levels in seedlings and leaves.

It localises to the nucleus. Its pathway is protein modification; protein ubiquitination. Involved in ubiquitination and subsequent proteasomal degradation of target proteins. Together with CUL1, RBX1 and a F-box protein, it forms a SCF E3 ubiquitin ligase complex. The functional specificity of this complex depends on the type of F-box protein. In the SCF complex, it serves as an adapter that links the F-box protein to CUL1. This is SKP1-like protein 15 (ASK15) from Arabidopsis thaliana (Mouse-ear cress).